A 352-amino-acid chain; its full sequence is Thymidine kinase (352 aa).

Residue 26–33 (GSMGIGKT) participates in ATP binding. The active-site Proton acceptor is Glu54. Gln95 provides a ligand contact to substrate. Arg185 contacts ATP. Arg191 is a binding site for substrate.

Belongs to the herpesviridae thymidine kinase family. As to quaternary structure, homodimer.

The catalysed reaction is thymidine + ATP = dTMP + ADP + H(+). In terms of biological role, catalyzes the transfer of the gamma-phospho group of ATP to thymidine to generate dTMP in the salvage pathway of pyrimidine synthesis. The dTMP serves as a substrate for DNA polymerase during viral DNA replication. Allows the virus to be reactivated and to grow in non-proliferative cells lacking a high concentration of phosphorylated nucleic acid precursors. The sequence is that of Thymidine kinase from Gallus gallus (Chicken).